Consider the following 656-residue polypeptide: Choline transporter-like protein 1 (656 aa).

Gly2 is lipidated: N-myristoyl glycine. Over Gly2–Pro29 the chain is Cytoplasmic. Residues Trp30–Ala50 traverse the membrane as a helical segment. Residues Thr51–Lys211 lie on the Extracellular side of the membrane. 2 N-linked (GlcNAc...) asparagine glycosylation sites follow: Asn134 and Asn179. A helical membrane pass occupies residues Glu212–Ile232. Residues Arg233–Arg237 lie on the Cytoplasmic side of the membrane. Residues Val238–Leu258 traverse the membrane as a helical segment. Topologically, residues Trp259 to Ala287 are extracellular. Residues Leu288–Val308 form a helical membrane-spanning segment. At Met309 to Ala314 the chain is on the cytoplasmic side. A helical transmembrane segment spans residues Leu315 to Phe335. The Extracellular segment spans residues Gln336–Pro337. A helical transmembrane segment spans residues Phe338–Leu358. The Cytoplasmic segment spans residues Gly359–Pro379. Residues Leu380–Ala400 traverse the membrane as a helical segment. Over Cys401–Thr441 the chain is Extracellular. Residues Val442–Ile462 traverse the membrane as a helical segment. At His463–Asp536 the chain is on the cytoplasmic side. A helical transmembrane segment spans residues Phe537–Leu557. The Extracellular segment spans residues Leu558–Thr565. The chain crosses the membrane as a helical span at residues Val566–Leu586. Over Ser587–Ala656 the chain is Cytoplasmic. Positions Ala635–Ala656 are disordered. At Ser651 the chain carries Phosphoserine.

It belongs to the CTL (choline transporter-like) family. As to expression, expressed in neurons, oligodendrocytes and astrocytes. Also expressed in the mucosal cell layer of the colon. In the developing brain, isoform 1 is expressed in both neurons and oligodendroglial cells, whereas isoform 2 is restricted to oligodendroglial cells.

The protein resides in the cell membrane. Its subcellular location is the mitochondrion outer membrane. The enzyme catalyses choline(out) + n H(+)(in) = choline(in) + n H(+)(out). The catalysed reaction is ethanolamine(out) + n H(+)(in) = ethanolamine(in) + n H(+)(out). Choline transporter, acts as a choline/H+ antiporter. Also acts as a high-affinity ethanolamine/H+ antiporter, regulating the supply of extracellular ethanolamine (Etn) for the CDP-Etn pathway, redistribute intracellular Etn and balance the CDP-Cho and CDP-Etn arms of the Kennedy pathway. Involved in membrane synthesis and myelin production. This chain is Choline transporter-like protein 1 (Slc44a1), found in Rattus norvegicus (Rat).